A 71-amino-acid chain; its full sequence is Large ribosomal subunit protein bL31 (71 aa).

The Zn(2+) site is built by Cys-16, Cys-18, Cys-36, and Cys-39.

It belongs to the bacterial ribosomal protein bL31 family. Type A subfamily. In terms of assembly, part of the 50S ribosomal subunit. Zn(2+) serves as cofactor.

Its function is as follows. Binds the 23S rRNA. This Pseudothermotoga lettingae (strain ATCC BAA-301 / DSM 14385 / NBRC 107922 / TMO) (Thermotoga lettingae) protein is Large ribosomal subunit protein bL31.